A 321-amino-acid polypeptide reads, in one-letter code: Putative glucan endo-1,3-beta-glucosidase GVI (321 aa).

The first 6 residues, 1-6, serve as a signal peptide directing secretion; that stretch reads LAGVEG. E100 (proton donor) is an active-site residue. Residue E241 is the Nucleophile of the active site.

Belongs to the glycosyl hydrolase 17 family.

The enzyme catalyses Hydrolysis of (1-&gt;3)-beta-D-glucosidic linkages in (1-&gt;3)-beta-D-glucans.. May provide a degree of protection against microbial invasion of germinated barley grain through its ability to degrade fungal cell wall polysaccharides. This is Putative glucan endo-1,3-beta-glucosidase GVI from Hordeum vulgare (Barley).